Here is a 224-residue protein sequence, read N- to C-terminus: GrpE protein homolog 2, mitochondrial (224 aa).

The transit peptide at Met1–Phe31 directs the protein to the mitochondrion. Position 141 is an N6-acetyllysine (Lys141).

Belongs to the GrpE family. As to quaternary structure, probable component of the PAM complex at least composed of a mitochondrial HSP70 protein, GRPEL1 or GRPEL2, TIMM44, TIMM16/PAM16 and TIMM14/DNAJC19.

The protein localises to the mitochondrion matrix. Essential component of the PAM complex, a complex required for the translocation of transit peptide-containing proteins from the inner membrane into the mitochondrial matrix in an ATP-dependent manner. Seems to control the nucleotide-dependent binding of mitochondrial HSP70 to substrate proteins. Stimulates ATPase activity of mt-HSP70. May also serve to modulate the interconversion of oligomeric (inactive) and monomeric (active) forms of mt-HSP70. This is GrpE protein homolog 2, mitochondrial (GRPEL2) from Bos taurus (Bovine).